The chain runs to 285 residues: Avenin-like b1 (285 aa).

Residues 1–18 (MKVFILALLALTATTAIA) form the signal peptide.

This sequence belongs to the prolamin family. In terms of processing, contains disulfide bonds.

Functionally, seed storage protein. Might be integrated via inter-chain disulfide bonds within the glutenin polymer. The chain is Avenin-like b1 (AVNLB) from Triticum aestivum (Wheat).